Consider the following 192-residue polypeptide: FMN-dependent NADH:quinone oxidoreductase 1 (192 aa).

Residues serine 9 and 15 to 17 (SYS) each bind FMN.

Belongs to the azoreductase type 1 family. In terms of assembly, homodimer. FMN serves as cofactor.

The catalysed reaction is 2 a quinone + NADH + H(+) = 2 a 1,4-benzosemiquinone + NAD(+). It carries out the reaction N,N-dimethyl-1,4-phenylenediamine + anthranilate + 2 NAD(+) = 2-(4-dimethylaminophenyl)diazenylbenzoate + 2 NADH + 2 H(+). Its function is as follows. Quinone reductase that provides resistance to thiol-specific stress caused by electrophilic quinones. In terms of biological role, also exhibits azoreductase activity. Catalyzes the reductive cleavage of the azo bond in aromatic azo compounds to the corresponding amines. This is FMN-dependent NADH:quinone oxidoreductase 1 from Colwellia psychrerythraea (strain 34H / ATCC BAA-681) (Vibrio psychroerythus).